The sequence spans 380 residues: F-box/kelch-repeat protein At3g18720 (380 aa).

One can recognise an F-box domain in the interval 47 to 94; that stretch reads LWDKQIPTDLLQEILSRLGLKANIHASLVCKTWLKEAVSVRKFQSRPW. Kelch repeat units follow at residues 190–233 and 234–279; these read CVIS…INRC and IFSN…LVRQ.

This chain is F-box/kelch-repeat protein At3g18720, found in Arabidopsis thaliana (Mouse-ear cress).